Reading from the N-terminus, the 78-residue chain is Small ribosomal subunit protein bS18 (78 aa).

It belongs to the bacterial ribosomal protein bS18 family. Part of the 30S ribosomal subunit. Forms a tight heterodimer with protein bS6.

In terms of biological role, binds as a heterodimer with protein bS6 to the central domain of the 16S rRNA, where it helps stabilize the platform of the 30S subunit. This chain is Small ribosomal subunit protein bS18, found in Kocuria rhizophila (strain ATCC 9341 / DSM 348 / NBRC 103217 / DC2201).